The primary structure comprises 373 residues: CCA-adding enzyme (373 aa).

2 residues coordinate ATP: Gly8 and Arg11. Residues Gly8 and Arg11 each contribute to the CTP site. Asp21 and Asp23 together coordinate Mg(2+). Positions 91, 137, and 140 each coordinate ATP. Residues Arg91, Arg137, and Arg140 each coordinate CTP.

The protein belongs to the tRNA nucleotidyltransferase/poly(A) polymerase family. Bacterial CCA-adding enzyme type 2 subfamily. Requires Mg(2+) as cofactor.

The catalysed reaction is a tRNA precursor + 2 CTP + ATP = a tRNA with a 3' CCA end + 3 diphosphate. The enzyme catalyses a tRNA with a 3' CCA end + 2 CTP + ATP = a tRNA with a 3' CCACCA end + 3 diphosphate. Its function is as follows. Catalyzes the addition and repair of the essential 3'-terminal CCA sequence in tRNAs without using a nucleic acid template. Adds these three nucleotides in the order of C, C, and A to the tRNA nucleotide-73, using CTP and ATP as substrates and producing inorganic pyrophosphate. tRNA 3'-terminal CCA addition is required both for tRNA processing and repair. Also involved in tRNA surveillance by mediating tandem CCA addition to generate a CCACCA at the 3' terminus of unstable tRNAs. While stable tRNAs receive only 3'-terminal CCA, unstable tRNAs are marked with CCACCA and rapidly degraded. In Marinobacter nauticus (strain ATCC 700491 / DSM 11845 / VT8) (Marinobacter aquaeolei), this protein is CCA-adding enzyme.